Reading from the N-terminus, the 876-residue chain is Alanine--tRNA ligase (876 aa).

The residue at position 74 (Lys74) is an N6-acetyllysine. His564, His568, Cys666, and His670 together coordinate Zn(2+).

This sequence belongs to the class-II aminoacyl-tRNA synthetase family. In terms of assembly, homotetramer. Requires Zn(2+) as cofactor.

It is found in the cytoplasm. It catalyses the reaction tRNA(Ala) + L-alanine + ATP = L-alanyl-tRNA(Ala) + AMP + diphosphate. Its function is as follows. Catalyzes the attachment of alanine to tRNA(Ala) in a two-step reaction: alanine is first activated by ATP to form Ala-AMP and then transferred to the acceptor end of tRNA(Ala). Also edits incorrectly charged Ser-tRNA(Ala) and Gly-tRNA(Ala) via its editing domain. This Shigella boydii serotype 4 (strain Sb227) protein is Alanine--tRNA ligase.